Consider the following 89-residue polypeptide: Small ribosomal subunit protein uS17 (89 aa).

It belongs to the universal ribosomal protein uS17 family. In terms of assembly, part of the 30S ribosomal subunit.

Its function is as follows. One of the primary rRNA binding proteins, it binds specifically to the 5'-end of 16S ribosomal RNA. This chain is Small ribosomal subunit protein uS17, found in Xanthomonas campestris pv. campestris (strain 8004).